A 283-amino-acid polypeptide reads, in one-letter code: Lipoyl synthase (283 aa).

[4Fe-4S] cluster contacts are provided by Cys-35, Cys-40, Cys-46, Cys-61, Cys-65, Cys-68, and Ser-273. The 216-residue stretch at 47–262 folds into the Radical SAM core domain; that stretch reads FRSRQATFLI…RERALAMGFK (216 aa).

This sequence belongs to the radical SAM superfamily. Lipoyl synthase family. Requires [4Fe-4S] cluster as cofactor.

The protein resides in the cytoplasm. The enzyme catalyses [[Fe-S] cluster scaffold protein carrying a second [4Fe-4S](2+) cluster] + N(6)-octanoyl-L-lysyl-[protein] + 2 oxidized [2Fe-2S]-[ferredoxin] + 2 S-adenosyl-L-methionine + 4 H(+) = [[Fe-S] cluster scaffold protein] + N(6)-[(R)-dihydrolipoyl]-L-lysyl-[protein] + 4 Fe(3+) + 2 hydrogen sulfide + 2 5'-deoxyadenosine + 2 L-methionine + 2 reduced [2Fe-2S]-[ferredoxin]. It functions in the pathway protein modification; protein lipoylation via endogenous pathway; protein N(6)-(lipoyl)lysine from octanoyl-[acyl-carrier-protein]: step 2/2. Catalyzes the radical-mediated insertion of two sulfur atoms into the C-6 and C-8 positions of the octanoyl moiety bound to the lipoyl domains of lipoate-dependent enzymes, thereby converting the octanoylated domains into lipoylated derivatives. This chain is Lipoyl synthase, found in Geotalea uraniireducens (strain Rf4) (Geobacter uraniireducens).